The chain runs to 404 residues: Inosine-5'-monophosphate dehydrogenase (404 aa).

Residues D172 and 222–224 (GIG) each bind NAD(+). K(+) is bound by residues G224 and G226. IMP is bound at residue S227. Residue C229 coordinates K(+). C229 acts as the Thioimidate intermediate in catalysis. Residues 262 to 264 (DGG), 285 to 286 (GN), and 309 to 313 (YVGMG) contribute to the IMP site. The active-site Proton acceptor is R325. E340 provides a ligand contact to IMP. Residues E394, S395, and H396 each contribute to the K(+) site.

This sequence belongs to the IMPDH/GMPR family. In terms of assembly, homotetramer. Requires K(+) as cofactor.

The catalysed reaction is IMP + NAD(+) + H2O = XMP + NADH + H(+). It participates in purine metabolism; XMP biosynthesis via de novo pathway; XMP from IMP: step 1/1. With respect to regulation, mycophenolic acid (MPA) is a non-competitive inhibitor that prevents formation of the closed enzyme conformation by binding to the same site as the amobile flap. In contrast, mizoribine monophosphate (MZP) is a competitive inhibitor that induces the closed conformation. MPA is a potent inhibitor of mammalian IMPDHs but a poor inhibitor of the bacterial enzymes. MZP is a more potent inhibitor of bacterial IMPDH. Catalyzes the conversion of inosine 5'-phosphate (IMP) to xanthosine 5'-phosphate (XMP), the first committed and rate-limiting step in the de novo synthesis of guanine nucleotides, and therefore plays an important role in the regulation of cell growth. Essential for mouse infection by tick bite and critical for the survival in environments that appear to lack sufficient amounts of guanine, guanosine, and/or deoxyguanosine to support spirochete growth, such as mammalian host tissues. The protein is Inosine-5'-monophosphate dehydrogenase of Borreliella burgdorferi (strain ATCC 35210 / DSM 4680 / CIP 102532 / B31) (Borrelia burgdorferi).